Consider the following 302-residue polypeptide: 4-diphosphocytidyl-2-C-methyl-D-erythritol kinase (302 aa).

K11 is a catalytic residue. 93–103 (PVASGLAGGST) is a binding site for ATP. Residue D135 is part of the active site.

It belongs to the GHMP kinase family. IspE subfamily.

The enzyme catalyses 4-CDP-2-C-methyl-D-erythritol + ATP = 4-CDP-2-C-methyl-D-erythritol 2-phosphate + ADP + H(+). The protein operates within isoprenoid biosynthesis; isopentenyl diphosphate biosynthesis via DXP pathway; isopentenyl diphosphate from 1-deoxy-D-xylulose 5-phosphate: step 3/6. In terms of biological role, catalyzes the phosphorylation of the position 2 hydroxy group of 4-diphosphocytidyl-2C-methyl-D-erythritol. The sequence is that of 4-diphosphocytidyl-2-C-methyl-D-erythritol kinase from Gloeobacter violaceus (strain ATCC 29082 / PCC 7421).